The primary structure comprises 252 residues: MPVATRQRSARAAGTAFSPLRWIGFLLGCIVAGVVAMQVYFFLQIAAWQYVAPSSTSFMRAERWRLCGFNVWNCSIDRRWVPYDQISRNLKRAVIASEDADFVNHPGYEIDAMLDAWERNKKRGRVVRGGSTITQQLAKNLFLSSEQHYLRKGQELAITWMLEFWLDKQRIFEIYLNSVEWGEGVFGAEAAAQHYFRTNAGKLGVGQAARLAAALPAPKCFDKKEYCANVRVNFRVKAGIIARRMGAATLPD.

The chain crosses the membrane as a helical span at residues 23-43 (IGFLLGCIVAGVVAMQVYFFL).

It belongs to the glycosyltransferase 51 family.

The protein resides in the cell inner membrane. The enzyme catalyses [GlcNAc-(1-&gt;4)-Mur2Ac(oyl-L-Ala-gamma-D-Glu-L-Lys-D-Ala-D-Ala)](n)-di-trans,octa-cis-undecaprenyl diphosphate + beta-D-GlcNAc-(1-&gt;4)-Mur2Ac(oyl-L-Ala-gamma-D-Glu-L-Lys-D-Ala-D-Ala)-di-trans,octa-cis-undecaprenyl diphosphate = [GlcNAc-(1-&gt;4)-Mur2Ac(oyl-L-Ala-gamma-D-Glu-L-Lys-D-Ala-D-Ala)](n+1)-di-trans,octa-cis-undecaprenyl diphosphate + di-trans,octa-cis-undecaprenyl diphosphate + H(+). The protein operates within cell wall biogenesis; peptidoglycan biosynthesis. Peptidoglycan polymerase that catalyzes glycan chain elongation from lipid-linked precursors. In Cupriavidus pinatubonensis (strain JMP 134 / LMG 1197) (Cupriavidus necator (strain JMP 134)), this protein is Biosynthetic peptidoglycan transglycosylase.